The chain runs to 262 residues: Putative BTB/POZ domain-containing protein L834 (262 aa).

One can recognise a BTB domain in the interval 16-86 (FDVVVELTDE…FYKKNIQPCI (71 aa)).

The protein belongs to the mimivirus BTB/WD family.

This chain is Putative BTB/POZ domain-containing protein L834, found in Acanthamoeba polyphaga (Amoeba).